We begin with the raw amino-acid sequence, 333 residues long: Probable pyridoxal reductase 2 (333 aa).

Y52 acts as the Proton donor in catalysis.

Belongs to the aldo/keto reductase family.

Its subcellular location is the cytoplasm. The enzyme catalyses pyridoxine + NADP(+) = pyridoxal + NADPH + H(+). Its function is as follows. Catalyzes the reduction of pyridoxal (PL) with NADPH and oxidation of pyridoxine (PN) with NADP(+). This chain is Probable pyridoxal reductase 2, found in Schizosaccharomyces pombe (strain 972 / ATCC 24843) (Fission yeast).